The chain runs to 706 residues: D-(-)-3-hydroxybutyrate oligomer hydrolase (706 aa).

The N-terminal stretch at 1 to 32 (MTTTSKNCLTLTSIAAAVAAVLVLSACGGGSA) is a signal peptide. Ser-311 serves as the catalytic Charge relay system.

It belongs to the D-(-)-3-hydroxybutyrate oligomer hydrolase family.

The protein resides in the secreted. The catalysed reaction is (3R)-hydroxybutanoate dimer + H2O = 2 (R)-3-hydroxybutanoate + H(+). It participates in lipid metabolism; butanoate metabolism. Its function is as follows. Participates in the degradation of poly-3-hydroxybutyrate (PHB). It works downstream of poly(3-hydroxybutyrate) depolymerase, hydrolyzing D(-)-3-hydroxybutyrate oligomers of various length (3HB-oligomers) into 3HB-monomers. This Polaromonas sp. (strain JS666 / ATCC BAA-500) protein is D-(-)-3-hydroxybutyrate oligomer hydrolase.